A 128-amino-acid polypeptide reads, in one-letter code: Small ribosomal subunit protein uS9 (128 aa).

This sequence belongs to the universal ribosomal protein uS9 family.

The chain is Small ribosomal subunit protein uS9 from Flavobacterium psychrophilum (strain ATCC 49511 / DSM 21280 / CIP 103535 / JIP02/86).